A 458-amino-acid polypeptide reads, in one-letter code: Transmembrane protein 143 (458 aa).

The next 2 helical transmembrane spans lie at 277–297 and 298–318; these read LLNL…GMVI and LSDL…FMGV. Ser-329 bears the Phosphoserine mark.

The protein localises to the membrane. This is Transmembrane protein 143 (Tmem143) from Mus musculus (Mouse).